The following is a 283-amino-acid chain: Elongation factor Ts (283 aa).

An involved in Mg(2+) ion dislocation from EF-Tu region spans residues Thr-80 to Val-83.

This sequence belongs to the EF-Ts family.

It is found in the cytoplasm. Functionally, associates with the EF-Tu.GDP complex and induces the exchange of GDP to GTP. It remains bound to the aminoacyl-tRNA.EF-Tu.GTP complex up to the GTP hydrolysis stage on the ribosome. The polypeptide is Elongation factor Ts (Klebsiella pneumoniae (strain 342)).